Here is a 259-residue protein sequence, read N- to C-terminus: Mediator of RNA polymerase II transcription subunit 7 (259 aa).

3 disordered regions span residues 1–52, 99–118, and 223–242; these read MAEP…EWSP, TQLY…SSQP, and GSTI…EDQI. Positions 31 to 44 are enriched in basic and acidic residues; that stretch reads ENIKKEASKGEDGR. A compositionally biased stretch (basic and acidic residues) spans 230-242; the sequence is TKDKKGVKPEDQI.

It belongs to the Mediator complex subunit 7 family. In terms of assembly, component of the Mediator complex.

The protein localises to the nucleus. Its function is as follows. Component of the Mediator complex, a coactivator involved in the regulated transcription of nearly all RNA polymerase II-dependent genes. Mediator functions as a bridge to convey information from gene-specific regulatory proteins to the basal RNA polymerase II transcription machinery. Mediator is recruited to promoters by direct interactions with regulatory proteins and serves as a scaffold for the assembly of a functional preinitiation complex with RNA polymerase II and the general transcription factors. This is Mediator of RNA polymerase II transcription subunit 7 (med7) from Emericella nidulans (strain FGSC A4 / ATCC 38163 / CBS 112.46 / NRRL 194 / M139) (Aspergillus nidulans).